Reading from the N-terminus, the 450-residue chain is MFGMSHDAYLLLDALVTIIGLIVLITRFKVHPFIALIIAAGFLGLTSGMPVEKIVKSFQDGFGGVLGFVGVILALGTMLGKLMADSGGADQIARTLIRAFGKERVHWSMMLAAFLVGIPLFFEIGFILLIPLVFIVARRSGVSLIKIGIPLLAGLSAVHGLVPPHPGPLLAIGVFGADIGKTILYGLIVALPTAAIAGPLFGALVSRYIPGTPSAELVEQIAHEPETQDLPSFGVTLATVLLPVFLMLLKTFADVAFPDGHAFRAWMDMIGHPISALLLALLVALYTFGYARGFDSKKILRLLDQSLAPTAAIVMIIGAGGGFKQMLVASGVGDVIGHLAVNAQISPILLAWLVAAVIRIATGSATVATITGAGIVVPVIDLIPGVNRELLVLATGAGSLILSHVNDAGFWLVKQYFNMSVSETFKTWTAMETILSVVGLVFILLLSLVL.

The next 12 helical transmembrane spans lie at 6–26 (HDAY…VLIT), 30–50 (VHPF…SGMP), 60–80 (DGFG…TMLG), 116–136 (VGIP…VFIV), 142–162 (VSLI…HGLV), 183–203 (ILYG…LFGA), 233–253 (FGVT…KTFA), 269–289 (MIGH…YTFG), 312–332 (AIVM…ASGV), 338–358 (HLAV…AAVI), 366–386 (TVAT…IPGV), and 430–450 (AMET…SLVL).

Belongs to the GntP permease family.

It is found in the cell inner membrane. It participates in carbohydrate acid metabolism; D-gluconate degradation. This Pseudomonas aeruginosa (strain ATCC 15692 / DSM 22644 / CIP 104116 / JCM 14847 / LMG 12228 / 1C / PRS 101 / PAO1) protein is Gluconate permease (gnuT).